The chain runs to 190 residues: Crossover junction endodeoxyribonuclease RuvC (190 aa).

Active-site residues include aspartate 8, glutamate 67, and aspartate 139. Positions 8, 67, and 139 each coordinate Mg(2+).

Belongs to the RuvC family. Homodimer which binds Holliday junction (HJ) DNA. The HJ becomes 2-fold symmetrical on binding to RuvC with unstacked arms; it has a different conformation from HJ DNA in complex with RuvA. In the full resolvosome a probable DNA-RuvA(4)-RuvB(12)-RuvC(2) complex forms which resolves the HJ. Mg(2+) is required as a cofactor.

It is found in the cytoplasm. The catalysed reaction is Endonucleolytic cleavage at a junction such as a reciprocal single-stranded crossover between two homologous DNA duplexes (Holliday junction).. The RuvA-RuvB-RuvC complex processes Holliday junction (HJ) DNA during genetic recombination and DNA repair. Endonuclease that resolves HJ intermediates. Cleaves cruciform DNA by making single-stranded nicks across the HJ at symmetrical positions within the homologous arms, yielding a 5'-phosphate and a 3'-hydroxyl group; requires a central core of homology in the junction. The consensus cleavage sequence is 5'-(A/T)TT(C/G)-3'. Cleavage occurs on the 3'-side of the TT dinucleotide at the point of strand exchange. HJ branch migration catalyzed by RuvA-RuvB allows RuvC to scan DNA until it finds its consensus sequence, where it cleaves and resolves the cruciform DNA. The polypeptide is Crossover junction endodeoxyribonuclease RuvC (Haemophilus influenzae (strain ATCC 51907 / DSM 11121 / KW20 / Rd)).